Reading from the N-terminus, the 758-residue chain is Probable serine/threonine-protein kinase HAL5-like (758 aa).

2 disordered regions span residues 1–170 (MGTV…SADD) and 189–252 (IDNA…HRGR). The span at 22-57 (RSISGSIKSLFKPSSVQNSTPTVSPHESSPPLGNSD) shows a compositional bias: polar residues. Residues 58-69 (NLKKLVDTKRAE) are compositionally biased toward basic and acidic residues. A compositionally biased stretch (low complexity) spans 129–153 (SSPRQSSSTNDRSSITSATSSVTSA). The span at 216-226 (DKNFESSEYEI) shows a compositional bias: basic and acidic residues. Positions 227 to 247 (RSNSLSRIHSTPQNESPTVNN) are enriched in polar residues. A Protein kinase domain is found at 442-744 (KSMGVVLGHG…IDQLLQSPWM (303 aa)). Residues 448 to 456 (LGHGAYGVV) and K485 contribute to the ATP site. Catalysis depends on D595, which acts as the Proton acceptor.

The protein belongs to the protein kinase superfamily. CAMK Ser/Thr protein kinase family. NPR/HAL subfamily. HAL5 sub-subfamily.

The enzyme catalyses L-seryl-[protein] + ATP = O-phospho-L-seryl-[protein] + ADP + H(+). It catalyses the reaction L-threonyl-[protein] + ATP = O-phospho-L-threonyl-[protein] + ADP + H(+). The chain is Probable serine/threonine-protein kinase HAL5-like from Vanderwaltozyma polyspora (strain ATCC 22028 / DSM 70294 / BCRC 21397 / CBS 2163 / NBRC 10782 / NRRL Y-8283 / UCD 57-17) (Kluyveromyces polysporus).